The sequence spans 353 residues: Nucleotide-binding protein sce5766 (353 aa).

27–34 (GLSGAGKS) serves as a coordination point for ATP. 76 to 79 (DVRV) is a binding site for GTP. A disordered region spans residues 310–353 (SGVPSGVGEGMAGAPGVDLRLAQPGATPSEPRPASDTSVTGGER). Residues 344–353 (SDTSVTGGER) are compositionally biased toward polar residues.

This sequence belongs to the RapZ-like family.

Displays ATPase and GTPase activities. The polypeptide is Nucleotide-binding protein sce5766 (Sorangium cellulosum (strain So ce56) (Polyangium cellulosum (strain So ce56))).